The sequence spans 119 residues: Ribonuclease P protein component (119 aa).

It belongs to the RnpA family. In terms of assembly, consists of a catalytic RNA component (M1 or rnpB) and a protein subunit.

The catalysed reaction is Endonucleolytic cleavage of RNA, removing 5'-extranucleotides from tRNA precursor.. Functionally, RNaseP catalyzes the removal of the 5'-leader sequence from pre-tRNA to produce the mature 5'-terminus. It can also cleave other RNA substrates such as 4.5S RNA. The protein component plays an auxiliary but essential role in vivo by binding to the 5'-leader sequence and broadening the substrate specificity of the ribozyme. The sequence is that of Ribonuclease P protein component from Beutenbergia cavernae (strain ATCC BAA-8 / DSM 12333 / CCUG 43141 / JCM 11478 / NBRC 16432 / NCIMB 13614 / HKI 0122).